Reading from the N-terminus, the 93-residue chain is Small ribosomal subunit protein uS19 (93 aa).

Belongs to the universal ribosomal protein uS19 family.

Functionally, protein S19 forms a complex with S13 that binds strongly to the 16S ribosomal RNA. This is Small ribosomal subunit protein uS19 from Geotalea uraniireducens (strain Rf4) (Geobacter uraniireducens).